An 83-amino-acid chain; its full sequence is Exodeoxyribonuclease 7 small subunit (83 aa).

It belongs to the XseB family. As to quaternary structure, heterooligomer composed of large and small subunits.

The protein resides in the cytoplasm. The catalysed reaction is Exonucleolytic cleavage in either 5'- to 3'- or 3'- to 5'-direction to yield nucleoside 5'-phosphates.. In terms of biological role, bidirectionally degrades single-stranded DNA into large acid-insoluble oligonucleotides, which are then degraded further into small acid-soluble oligonucleotides. The chain is Exodeoxyribonuclease 7 small subunit from Bradyrhizobium sp. (strain ORS 278).